A 323-amino-acid chain; its full sequence is MAACGEPGRPWQEEEAAAVVVVGSCMTDLVSLTSRLPKTGETIHGHEFFIGFGGKGANQCVQAARLGAKAAIVCKVGNDSFGNDYIENLKQNHISTEFTYQTRDAATGTASIIVNNEGQNIIVIVAGANLFLNSEDLKKAASVISRAKVMICQLEISPAASLEALTMARRSGVKTLFNPAPAMADLDPQFYTLSSIFCCNESEAEILTGHAVSDPTTAGKAAMILLERGCQVVVITLGASGCVILSQAEPVPKHIPTEAVKAVDTTGAGDSFVGALAFYLAYYPNLSLEEMLKRSNFIAAVSVQATGTQSSYPYKKDLPLALF.

Residues 26 to 28 (MTD), 54 to 58 (GKGAN), and Glu-155 contribute to the substrate site. ATP is bound by residues Asn-200, 236 to 241 (TLGASG), and Thr-257. Asp-264 and Thr-266 together coordinate K(+). ATP contacts are provided by residues 269-270 (GD) and Asn-296. Asp-270 lines the substrate pocket. Asp-270 acts as the Proton acceptor in catalysis. Residues Ser-302, Ala-305, Gly-307, and Ser-311 each contribute to the K(+) site.

The protein belongs to the carbohydrate kinase PfkB family. Ribokinase subfamily. Homodimer. Requires Mg(2+) as cofactor.

It is found in the cytoplasm. Its subcellular location is the nucleus. The enzyme catalyses D-ribose + ATP = D-ribose 5-phosphate + ADP + H(+). Its pathway is carbohydrate metabolism; D-ribose degradation; D-ribose 5-phosphate from beta-D-ribopyranose: step 2/2. Its activity is regulated as follows. Activated by a monovalent cation that binds near, but not in, the active site. The most likely occupant of the site in vivo is potassium. Ion binding induces a conformational change that may alter substrate affinity. Competitively inhibited by phosphonoacetic acid, etidronate, 2-carboxethylphosphonic acid, N-(phosphonomethyl)glycine, N-(phosphonomethyl)iminodiacetic acid and clodronate. Catalyzes the phosphorylation of ribose at O-5 in a reaction requiring ATP and magnesium. The resulting D-ribose-5-phosphate can then be used either for sythesis of nucleotides, histidine, and tryptophan, or as a component of the pentose phosphate pathway. The protein is Ribokinase of Mus musculus (Mouse).